A 404-amino-acid chain; its full sequence is Protein IQ-DOMAIN 12 (404 aa).

The calmodulin-binding stretch occupies residues 8–25 (FGWMKRLFICEAKARAEK). The short motif at 11–18 (MKRLFICE) is the Nuclear localization signal 1 element. IQ domains are found at residues 108-135 (NVAAIKIQSAFRASLARKALRALKALVR) and 136-158 (LQAIVRGRAVRRKVSALLKSSHS). The short motif at 226–233 (IKRDRMLK) is the Nuclear localization signal 2 element.

This sequence belongs to the IQD family. In terms of assembly, binds to multiple calmodulin (CaM) in the presence of Ca(2+) and CaM-like proteins.

The protein localises to the nucleus. Its subcellular location is the cell membrane. In terms of biological role, may be involved in cooperative interactions with calmodulins or calmodulin-like proteins. Recruits calmodulin proteins to microtubules, thus being a potential scaffold in cellular signaling and trafficking. May associate with nucleic acids and regulate gene expression at the transcriptional or post-transcriptional level. This Arabidopsis thaliana (Mouse-ear cress) protein is Protein IQ-DOMAIN 12.